A 153-amino-acid polypeptide reads, in one-letter code: Transcriptional repressor NrdR (153 aa).

Residues 3–34 fold into a zinc finger; that stretch reads CPFCNHLHDKVVDSRESKEGDAIRRRRECLEC. The region spanning 49 to 139 is the ATP-cone domain; that stretch reads YMVVKKDGRR…VYRDFQDEQA (91 aa).

This sequence belongs to the NrdR family. The cofactor is Zn(2+).

Functionally, negatively regulates transcription of bacterial ribonucleotide reductase nrd genes and operons by binding to NrdR-boxes. This Solibacter usitatus (strain Ellin6076) protein is Transcriptional repressor NrdR.